Here is a 1086-residue protein sequence, read N- to C-terminus: MRGKWLRLCLAAVLIVSLLPGLGAGEWKASAAKAGDILLSHSFEEGTTQGWTARGGVKVDVTAEQAYQGKQSLQTTGRTEAWNGPSLSLTDVVHKNEVVEISGYVKLVAGSAPPDLKFTVERRDRNGDTQYDQVNAAEQVTDQKWVKLQGQYSYEQGSSLLLYLESTDAKAAYLLDEFQIRLVKAAPENPGEPGEAGQALFKAYFEDGNIGNWRARGTEKLEVVSGIGHNSNRSLKTSSRSETYHGPLVEVLPYLQKGSTVHISFWAMYDEGPATQVINGSLEKEFNRDTANLEYAMFASTTLNKGQWKKIEADIIVPAESTGISGLRMYAETPWKQSSEVTETDTIPFYVDDVQITATEAIAIEKNIPDLAKKLGSSYALGAAIDQTALDPKDPHSELLTKHFNSITAGNFMKMDAMQPTEGKFVWSEADKLVNFAAANNMQVRGHTLLWHSQVPDWFFTDPNDPSKPATREQLMQRMKTHIQTIVSRYKGKVHTWDVVNEVISDGGGLRNQASGSKWRDIIGDVDGDGDDSDYIELAFRYAREADPDAVLVINDYGIEGSVSKMNDMVKLVEKLLAKGTPIDAIGFQMHVSMYGPDIKQIREAFNRAAALGVHIQVTELDMSIYSGNSEQEKPVTDEMMLEQAYRYRALFDLFKEFDDRGVMDSVTLWGLADDGTWLDDFPVKGRKDAPLLFDRKLKAKPAYWALVDPSTLPVYRNEWTASQAKVSLPDRKGQEDIIWGAVRALPFSHVIEGAVGTTGEVKTLWDGKQLNLRIEVKDATRLKGDQVEVFVSPEDMTAGKKNSTPKDGQYIFNRDGGKGKDQKLYQVKENKSGYVVYASLPLSSADLAAGKVLSLDFRITDKQPNGKTSIVVWNDVNNQQPQKTENRGKLKLGFDLKHAKVMYGTPTVDGKEDKLWKKAVTITTDVKVTGNSGAKAKAKLLWDEKYLYVLAEVKDPLLSKKSANAHEQDSIELFIDLNKNQTNSYEEDDAQYRVNFDNETSFGGSPRKELFKSATRLTKEGYIVEAAIPLENVRTKESKWIGFDLQVNDDGAGDGKRSSVFMWSDPSGNSYRDTSGFGSLLLMKK.

An N-terminal signal peptide occupies residues 1-31; it reads MRGKWLRLCLAAVLIVSLLPGLGAGEWKASA. CBM-cenC domains follow at residues 35–183 and 197–359; these read GDIL…IRLV and GQAL…ITAT. Residues 365-710 form the GH10 domain; that stretch reads EKNIPDLAKK…KPAYWALVDP (346 aa). The Proton donor role is filled by glutamate 502. Aspartate 556 is an active-site residue. Glutamate 620 functions as the Nucleophile in the catalytic mechanism.

This sequence belongs to the glycosyl hydrolase 10 (cellulase F) family.

The catalysed reaction is Endohydrolysis of (1-&gt;4)-beta-D-xylosidic linkages in xylans.. The protein operates within glycan degradation; xylan degradation. In terms of biological role, endoxylanase with high hydrolytic activity on birchwood and oat spelt xylan. Xylotetraose, xylotriose, xylobiose and xylose are the main products from birchwood xylan hydrolysis. Shows increasing activity on xylo-oligosaccharides of increasing length. Displays very low hydrolytic activity on Avicel, carboxymethylcellulose (CMC) and p-nitrophenyl-beta-xylopyranoside. Also shows transxylosidase activity, allowing the formation of xylo-oligosaccharides of higher degree of polymerization than the starting substrate. In Paenibacillus barcinonensis, this protein is Endo-1,4-beta-xylanase C (xynC).